Reading from the N-terminus, the 395-residue chain is Protein hedgehog (395 aa).

Residues 1–26 (MDNHSSVPWASAASVTCLSLDAKCHS) form the signal peptide. Low complexity predominate over residues 26–43 (SSSSSCSSKSTASSISAS). A disordered region spans residues 26–46 (SSSSSCSSKSTASSISASPET). The propeptide occupies 27–82 (SSSSCSSKSTASSISASPETQTMRHIAHTQRCLSRLTSLVALLLIVLPMMFSPAHS). A lipid anchor (N-palmitoyl cysteine) is attached at Cys-83. Ca(2+) is bound by residues Glu-147, Glu-148, Asp-153, Thr-183, Glu-184, Asp-187, and Asp-189. A lipid anchor (Cholesterol glycine ester) is attached at Gly-255.

This sequence belongs to the hedgehog family. In terms of assembly, interacts with shf. The C-terminal part of the hedgehog protein precursor displays an autoproteolysis activity that results in the cleavage of the full-length protein into two parts (N-product and C-product). In addition, the C-terminal part displays a cholesterol transferase activity that results by the covalent attachment of a cholesterol moiety to the C-terminal of the newly generated N-product. The N-product is the active species in both local and long-range signaling, whereas the C-product has no signaling activity. In terms of processing, cholesterylation is required for N-product targeting to lipid rafts and multimerization. Post-translationally, N-palmitoylation by Rasp of the hedgehog N-product, within the secretory pathway, is required for the embryonic and larval patterning activities of the hedgehog signal.

It localises to the nucleus. The protein localises to the cytoplasm. Its subcellular location is the cell membrane. The enzyme catalyses glycyl-L-cysteinyl-[protein] + cholesterol + H(+) = [protein]-C-terminal glycyl cholesterol ester + N-terminal L-cysteinyl-[protein]. Functionally, the C-terminal part of the hedgehog protein precursor displays an autoproteolysis activity that results in the cleavage of the full-length protein into two parts (N-product and C-product). In addition, the C-terminal part displays a cholesterol transferase activity that results by the covalent attachment of a cholesterol moiety to the C-terminal of the newly generated N-product. Once cleaved, the C-product has no signaling activity and diffuses from the cell. The dually lipidated hedgehog protein N-product is a morphogen which is essential for a variety of patterning events during development. Establishes the anterior-posterior axis of the embryonic segments and patterns the larval imaginal disks. Binds to the patched (ptc) receptor, which functions in association with smoothened (smo), to activate the transcription of target genes wingless (wg), decapentaplegic (dpp) and ptc. In the absence of hh, ptc represses the constitutive signaling activity of smo through fused (fu). Essential component of a signaling pathway which regulates the Duox-dependent gut immune response to bacterial uracil; required to activate Cad99C-dependent endosome formation, norpA-dependent Ca2+ mobilization and p38 MAPK, which are essential steps in the Duox-dependent production of reactive oxygen species (ROS) in response to intestinal bacterial infection. During photoreceptor differentiation, it up-regulates transcription of Ubr3, which in turn promotes the hh-signaling pathway by mediating the ubiquitination and degradation of cos. This Drosophila simulans (Fruit fly) protein is Protein hedgehog.